We begin with the raw amino-acid sequence, 329 residues long: Sex comb on midleg-like protein 1 (329 aa).

S138 and S238 each carry phosphoserine. Residues W258 to K325 form the SAM domain.

The protein belongs to the SCM family.

The protein resides in the nucleus. Functionally, putative Polycomb group (PcG) protein. PcG proteins act by forming multiprotein complexes, which are required to maintain the transcriptionally repressive state of homeotic genes throughout development. May be involved in spermatogenesis during sexual maturation. In Hoolock hoolock (Western hoolock gibbon), this protein is Sex comb on midleg-like protein 1 (SCML1).